The sequence spans 2244 residues: Multifunctional protein ura1 (2244 aa).

A GATase (Glutamine amidotransferase) region spans residues 1 to 437; sequence MSGLLPSLSS…GPRDTEFLFD (437 aa). Residues 16 to 44 are disordered; sequence QSEALGMPRTHGPKPSENDPKEPTCSPSP. 3 residues coordinate L-glutamine: S101, G309, and G311. One can recognise a Glutamine amidotransferase type-1 domain in the interval 264–449; the sequence is RILVIDVGMK…IDVVKRSADA (186 aa). C338 serves as the catalytic Nucleophile; for GATase activity. Residues Q342, N380, G382, and Y383 each coordinate L-glutamine. Residues H422 and E424 each act as for GATase activity in the active site. The tract at residues 438–477 is linker; it reads VFIDVVKRSADAKSLQPFKLPGGTIEENRSRHPLVDAKRV. Positions 478–1014 are CPSase A; the sequence is LILGSGGLSI…VEHDIHFNDK (537 aa). Positions 478–1514 are CPSase (Carbamoyl phosphate synthase); sequence LILGSGGLSI…TNVKCAKLMI (1037 aa). Residues R594, R634, G640, G641, R671, M673, E678, G704, I705, H706, Q747, and E761 each coordinate ATP. The 193-residue stretch at 598–790 folds into the ATP-grasp 1 domain; that stretch reads ARAMDEINEK…LAFTAAKLGL (193 aa). Residues Q747, E761, and N763 each coordinate Mg(2+). Residues Q747, E761, and N763 each contribute to the Mn(2+) site. A CPSase B region spans residues 1015–1514; sequence GVMVLGSGVY…TNVKCAKLMI (500 aa). S1119 is subject to Phosphoserine. An ATP-grasp 2 domain is found at 1133-1324; sequence SRMLDDIGVD…MISMATDVIM (192 aa). Residues R1169, K1208, I1210, E1215, G1240, V1241, H1242, S1243, Q1283, and E1295 each contribute to the ATP site. Positions 1283, 1295, and 1297 each coordinate Mg(2+). The Mn(2+) site is built by Q1283, E1295, and N1297. The MGS-like domain maps to 1390–1552; the sequence is FRLPKKNILI…INISAFLPEF (163 aa). The interval 1515–1524 is linker; it reads EAICRNLDFS. The tract at residues 1525–1853 is defective DHOase domain; that stretch reads LSTVDFQSSF…FDGHDVFFDG (329 aa). The interval 1854-1935 is linker; sequence ELNFEHTYGR…VQLINSSPFY (82 aa). S1881 and S1885 each carry phosphoserine. The ATCase (Aspartate transcarbamylase) stretch occupies residues 1936–2244; sequence RKHIISVHQV…CVMGATEVAN (309 aa). Carbamoyl phosphate contacts are provided by R1988 and T1989. K2016 lines the L-aspartate pocket. The carbamoyl phosphate site is built by R2037, H2065, and Q2068. Positions 2098 and 2160 each coordinate L-aspartate. The carbamoyl phosphate site is built by L2199 and P2200.

It in the N-terminal section; belongs to the CarA family. This sequence in the 2nd section; belongs to the CarB family. In the 3rd section; belongs to the metallo-dependent hydrolases superfamily. DHOase family. CAD subfamily. The protein in the C-terminal section; belongs to the aspartate/ornithine carbamoyltransferase superfamily. ATCase family. Mg(2+) serves as cofactor. Requires Mn(2+) as cofactor.

The enzyme catalyses hydrogencarbonate + L-glutamine + 2 ATP + H2O = carbamoyl phosphate + L-glutamate + 2 ADP + phosphate + 2 H(+). It carries out the reaction L-glutamine + H2O = L-glutamate + NH4(+). It catalyses the reaction hydrogencarbonate + NH4(+) + 2 ATP = carbamoyl phosphate + 2 ADP + phosphate + 2 H(+). The catalysed reaction is carbamoyl phosphate + L-aspartate = N-carbamoyl-L-aspartate + phosphate + H(+). The protein operates within pyrimidine metabolism; UMP biosynthesis via de novo pathway; (S)-dihydroorotate from bicarbonate: step 1/3. It participates in pyrimidine metabolism; UMP biosynthesis via de novo pathway; (S)-dihydroorotate from bicarbonate: step 2/3. With respect to regulation, both CPSase and ATCase activities are feedback inhibited by the end product UTP. Multifunctional protein that encodes the first 2 enzymatic activities of the de novo pyrimidine pathway: carbamoylphosphate synthetase (CPSase; EC 6.3.5.5) and aspartate transcarbamylase (ATCase; EC 2.1.3.2). The CPSase-function is accomplished in 2 steps, by a glutamine-dependent amidotransferase activity (GATase) that binds and cleaves glutamine to produce ammonia, followed by an ammonium-dependent carbamoyl phosphate synthetase, which reacts with the ammonia, hydrogencarbonate and ATP to form carbamoyl phosphate. The endogenously produced carbamoyl phosphate is sequestered and channeled to the ATCase active site. ATCase then catalyzes the formation of carbamoyl-L-aspartate from L-aspartate and carbamoyl phosphate. This Schizosaccharomyces pombe (strain 972 / ATCC 24843) (Fission yeast) protein is Multifunctional protein ura1 (ura1).